The sequence spans 96 residues: Putative pterin-4-alpha-carbinolamine dehydratase (96 aa).

The protein belongs to the pterin-4-alpha-carbinolamine dehydratase family.

The enzyme catalyses (4aS,6R)-4a-hydroxy-L-erythro-5,6,7,8-tetrahydrobiopterin = (6R)-L-erythro-6,7-dihydrobiopterin + H2O. This is Putative pterin-4-alpha-carbinolamine dehydratase from Prochlorococcus marinus subsp. pastoris (strain CCMP1986 / NIES-2087 / MED4).